We begin with the raw amino-acid sequence, 247 residues long: NH(3)-dependent NAD(+) synthetase (247 aa).

29–36 serves as a coordination point for ATP; the sequence is GISGGIDS. Asp-35 contacts Mg(2+). Arg-120 contacts deamido-NAD(+). Thr-140 is a binding site for ATP. Glu-145 lines the Mg(2+) pocket. Lys-153 and Asp-160 together coordinate deamido-NAD(+). Positions 169 and 191 each coordinate ATP. 237-238 contributes to the deamido-NAD(+) binding site; the sequence is HK.

It belongs to the NAD synthetase family. In terms of assembly, homodimer.

The enzyme catalyses deamido-NAD(+) + NH4(+) + ATP = AMP + diphosphate + NAD(+) + H(+). It participates in cofactor biosynthesis; NAD(+) biosynthesis; NAD(+) from deamido-NAD(+) (ammonia route): step 1/1. Functionally, catalyzes the ATP-dependent amidation of deamido-NAD to form NAD. Uses ammonia as a nitrogen source. This Alkaliphilus metalliredigens (strain QYMF) protein is NH(3)-dependent NAD(+) synthetase.